A 263-amino-acid polypeptide reads, in one-letter code: Sepiapterin reductase (263 aa).

NADP(+)-binding positions include 18-24 (GASRGFG), 46-47 (RT), and 73-74 (DL). Residues 160–161 (SL) and Tyr-173 contribute to the substrate site. Lys-177 serves as a coordination point for NADP(+). Gly-202 is a substrate binding site. 204-209 (LDTDMH) contributes to the NADP(+) binding site. Asp-260 provides a ligand contact to substrate.

Belongs to the sepiapterin reductase family. Homodimer.

The protein localises to the cytoplasm. It carries out the reaction L-erythro-7,8-dihydrobiopterin + NADP(+) = L-sepiapterin + NADPH + H(+). It catalyses the reaction (6R)-L-erythro-5,6,7,8-tetrahydrobiopterin + 2 NADP(+) = 6-pyruvoyl-5,6,7,8-tetrahydropterin + 2 NADPH + 2 H(+). In terms of biological role, catalyzes the final one or two reductions in tetra-hydrobiopterin biosynthesis to form 5,6,7,8-tetrahydrobiopterin. The protein is Sepiapterin reductase (spr) of Xenopus laevis (African clawed frog).